Consider the following 129-residue polypeptide: DFRCPTTWSASKLYCYKPFKEKKTWIEAERFCAKQAENGHLVSIGSAAEADFLDLVIVVNFDKQRYRAWTGLTERNLKWTNGASVSYENLYEPYIRKCFVVQPWEGKSKWYKADCEEKNAFLCKFPKPH.

One can recognise a C-type lectin domain in the interval 3–125 (RCPTTWSASK…EEKNAFLCKF (123 aa)). Cystine bridges form between Cys-4–Cys-15, Cys-32–Cys-123, and Cys-98–Cys-115.

Heterotetramer of subunit alpha, beta, gamma and delta; only the gamma and the delta subunits are disulfide-linked. Alpha-beta heterodimer and gamma-delta heterodimer associate orthogonally, giving a cruciform conformation. This heterotetramer may covalently dimerizes thanks to the gamma subunit. As to expression, expressed by the venom gland.

It is found in the secreted. Potent inhibitor of collagen-induced platelet aggregation. It acts by binding to the integrin alpha2A domain and blocks collagen binding to integrin alpha-2/beta-1 (ITGA2/ITGB1). The gamma/delta subunits mainly contribute to this activity. This Calloselasma rhodostoma (Malayan pit viper) protein is Snaclec rhodocetin subunit beta.